The chain runs to 286 residues: NAD kinase (286 aa).

The active-site Proton acceptor is Asp-67. Residues 67-68 (DG), Arg-72, 141-142 (ND), Arg-152, Asp-171, 182-187 (TAYSLS), and Gln-242 each bind NAD(+).

This sequence belongs to the NAD kinase family. A divalent metal cation is required as a cofactor.

It is found in the cytoplasm. It catalyses the reaction NAD(+) + ATP = ADP + NADP(+) + H(+). Its function is as follows. Involved in the regulation of the intracellular balance of NAD and NADP, and is a key enzyme in the biosynthesis of NADP. Catalyzes specifically the phosphorylation on 2'-hydroxyl of the adenosine moiety of NAD to yield NADP. The polypeptide is NAD kinase (Ruminiclostridium cellulolyticum (strain ATCC 35319 / DSM 5812 / JCM 6584 / H10) (Clostridium cellulolyticum)).